Reading from the N-terminus, the 521-residue chain is UDP-N-acetylmuramate--L-alanine ligase (521 aa).

136–142 (GAHGKTT) lines the ATP pocket.

The protein belongs to the MurCDEF family.

It is found in the cytoplasm. It carries out the reaction UDP-N-acetyl-alpha-D-muramate + L-alanine + ATP = UDP-N-acetyl-alpha-D-muramoyl-L-alanine + ADP + phosphate + H(+). It participates in cell wall biogenesis; peptidoglycan biosynthesis. Functionally, cell wall formation. The polypeptide is UDP-N-acetylmuramate--L-alanine ligase (Bifidobacterium adolescentis (strain ATCC 15703 / DSM 20083 / NCTC 11814 / E194a)).